A 228-amino-acid polypeptide reads, in one-letter code: Aquaporin Z (228 aa).

The next 5 membrane-spanning stretches (helical) occupy residues 1-21 (MLNK…GGCG), 46-66 (TVLT…NPAV), 82-102 (IPYW…LYVI), 129-149 (MMAG…IILG), and 154-174 (LAPA…IHLV). Positions 63–65 (NPA) match the NPA 1 motif. Residues 184–186 (NPA) carry the NPA 2 motif. The chain crosses the membrane as a helical span at residues 205–225 (LFWVAPLVGAVIGAIIWKGLL).

It belongs to the MIP/aquaporin (TC 1.A.8) family. As to quaternary structure, homotetramer.

It is found in the cell inner membrane. It carries out the reaction H2O(in) = H2O(out). In terms of biological role, channel that permits osmotically driven movement of water in both directions. It is involved in the osmoregulation and in the maintenance of cell turgor during volume expansion in rapidly growing cells. It mediates rapid entry or exit of water in response to abrupt changes in osmolarity. The polypeptide is Aquaporin Z (Brucella suis biovar 1 (strain 1330)).